The primary structure comprises 316 residues: Aspartate carbamoyltransferase catalytic subunit (316 aa).

Residues Arg66 and Thr67 each contribute to the carbamoyl phosphate site. Residue Lys94 coordinates L-aspartate. Positions 116, 146, and 149 each coordinate carbamoyl phosphate. Residues Arg179 and Arg234 each contribute to the L-aspartate site. 2 residues coordinate carbamoyl phosphate: Gly275 and Pro276.

It belongs to the aspartate/ornithine carbamoyltransferase superfamily. ATCase family. As to quaternary structure, heterododecamer (2C3:3R2) of six catalytic PyrB chains organized as two trimers (C3), and six regulatory PyrI chains organized as three dimers (R2).

It carries out the reaction carbamoyl phosphate + L-aspartate = N-carbamoyl-L-aspartate + phosphate + H(+). It functions in the pathway pyrimidine metabolism; UMP biosynthesis via de novo pathway; (S)-dihydroorotate from bicarbonate: step 2/3. Functionally, catalyzes the condensation of carbamoyl phosphate and aspartate to form carbamoyl aspartate and inorganic phosphate, the committed step in the de novo pyrimidine nucleotide biosynthesis pathway. This is Aspartate carbamoyltransferase catalytic subunit from Nitrosomonas eutropha (strain DSM 101675 / C91 / Nm57).